Consider the following 300-residue polypeptide: Large ribosomal subunit protein uL18 (300 aa).

Residues 246–267 show a composition bias toward basic and acidic residues; the sequence is NIRSDPKRDRKPKKDVSKEPKR. Residues 246–276 are disordered; that stretch reads NIRSDPKRDRKPKKDVSKEPKRWNAKKLTNA.

Belongs to the universal ribosomal protein uL18 family. In terms of assembly, component of the large ribosomal subunit (LSU).

The protein localises to the cytoplasm. It localises to the nucleus. Its function is as follows. Component of the ribosome, a large ribonucleoprotein complex responsible for the synthesis of proteins in the cell. The small ribosomal subunit (SSU) binds messenger RNAs (mRNAs) and translates the encoded message by selecting cognate aminoacyl-transfer RNA (tRNA) molecules. The large subunit (LSU) contains the ribosomal catalytic site termed the peptidyl transferase center (PTC), which catalyzes the formation of peptide bonds, thereby polymerizing the amino acids delivered by tRNAs into a polypeptide chain. The nascent polypeptides leave the ribosome through a tunnel in the LSU and interact with protein factors that function in enzymatic processing, targeting, and the membrane insertion of nascent chains at the exit of the ribosomal tunnel. The protein is Large ribosomal subunit protein uL18 (RpL5) of Toxoptera citricida (Brown citrus aphid).